A 779-amino-acid polypeptide reads, in one-letter code: Phosphoribosylformylglycinamidine synthase subunit PurL (779 aa).

Residue H52 is part of the active site. ATP is bound by residues Y55 and K94. E96 is a binding site for Mg(2+). Substrate contacts are provided by residues 97 to 100 (SHNH) and R119. H98 serves as the catalytic Proton acceptor. D120 serves as a coordination point for Mg(2+). Q243 contacts substrate. D271 is a Mg(2+) binding site. 315–317 (ESQ) lines the substrate pocket. ATP is bound by residues N523 and G560. Residue N561 participates in Mg(2+) binding. S563 provides a ligand contact to substrate.

It belongs to the FGAMS family. As to quaternary structure, monomer. Part of the FGAM synthase complex composed of 1 PurL, 1 PurQ and 2 PurS subunits.

It localises to the cytoplasm. It catalyses the reaction N(2)-formyl-N(1)-(5-phospho-beta-D-ribosyl)glycinamide + L-glutamine + ATP + H2O = 2-formamido-N(1)-(5-O-phospho-beta-D-ribosyl)acetamidine + L-glutamate + ADP + phosphate + H(+). The protein operates within purine metabolism; IMP biosynthesis via de novo pathway; 5-amino-1-(5-phospho-D-ribosyl)imidazole from N(2)-formyl-N(1)-(5-phospho-D-ribosyl)glycinamide: step 1/2. Its function is as follows. Part of the phosphoribosylformylglycinamidine synthase complex involved in the purines biosynthetic pathway. Catalyzes the ATP-dependent conversion of formylglycinamide ribonucleotide (FGAR) and glutamine to yield formylglycinamidine ribonucleotide (FGAM) and glutamate. The FGAM synthase complex is composed of three subunits. PurQ produces an ammonia molecule by converting glutamine to glutamate. PurL transfers the ammonia molecule to FGAR to form FGAM in an ATP-dependent manner. PurS interacts with PurQ and PurL and is thought to assist in the transfer of the ammonia molecule from PurQ to PurL. The sequence is that of Phosphoribosylformylglycinamidine synthase subunit PurL from Prochlorococcus marinus (strain MIT 9301).